A 420-amino-acid polypeptide reads, in one-letter code: Polyketide biosynthesis 3-hydroxy-3-methylglutaryl-ACP synthase PksG (420 aa).

Residue E82 is the Proton donor/acceptor of the active site. Catalysis depends on C114, which acts as the Acyl-thioester intermediate. Residue H250 is the Proton donor/acceptor of the active site.

It belongs to the thiolase-like superfamily. HMG-CoA synthase family.

The protein localises to the cytoplasm. It carries out the reaction 3-oxobutanoyl-[ACP] + acetyl-[ACP] + H2O = (3S)-hydroxy-3-methylglutaryl-[ACP] + holo-[ACP] + H(+). The protein operates within antibiotic biosynthesis; bacillaene biosynthesis. Its function is as follows. Involved in some intermediate steps for the synthesis of the antibiotic polyketide bacillaene which is involved in secondary metabolism. It catalyzes the aldol condensation between the acetyl group attached to the acyl-carrier-protein AcpK (Ac-AcpK) and a beta-ketothioester polyketide intermediate linked to one of the consecutive thiolation domains of PksL. This Bacillus subtilis (strain 168) protein is Polyketide biosynthesis 3-hydroxy-3-methylglutaryl-ACP synthase PksG (pksG).